A 64-amino-acid polypeptide reads, in one-letter code: UPF0434 protein Bcen_1934 (64 aa).

It belongs to the UPF0434 family.

In Burkholderia orbicola (strain AU 1054), this protein is UPF0434 protein Bcen_1934.